Consider the following 327-residue polypeptide: Metal-binding protein YtgA (327 aa).

An N-terminal signal peptide occupies residues 1 to 20; the sequence is MDAKMGYIFKVMRWIFCFVA. Residues His73, His139, His205, and Asp297 each contribute to the Fe(2+) site.

The protein belongs to the bacterial solute-binding protein 9 family. As to quaternary structure, monomer.

It localises to the periplasm. Its function is as follows. Part of the ATP-binding cassette (ABC) transport system YtgABCD involved in metal import. Binds Fe(2+), Mn(2+) and Ni(2+), with a preference for Fe(2+) and delivers them to the membrane permease for translocation into the cytoplasm. In Chlamydia pneumoniae (Chlamydophila pneumoniae), this protein is Metal-binding protein YtgA.